The primary structure comprises 785 residues: Proprotein convertase subtilisin/kexin type 7 (785 aa).

Positions 1–37 are cleaved as a signal peptide; it reads MPKGRQKVPHLDAPLGLPTCLWLELAGLFLLVPWVMG. Positions 38–141 are excised as a propeptide; the sequence is LAGTGGPDGQ…EQRLLRRAKR (104 aa). The Extracellular segment spans residues 142–667; that stretch reads SVHFNDPKYP…YTITPNTLKT (526 aa). Residues 153–473 form the Peptidase S8 domain; that stretch reads QWHLNNRRSP…FGLLNAWRLV (321 aa). 2 N-linked (GlcNAc...) asparagine glycosylation sites follow: Asn-167 and Asn-175. The Charge relay system role is filled by Asp-187. A disordered region spans residues 197 to 219; the sequence is IAPNYSPEGSYDLNSNDPDPMPH. The active-site Charge relay system is His-228. The N-linked (GlcNAc...) asparagine glycan is linked to Asn-241. Ser-406 (charge relay system) is an active-site residue. A P/Homo B domain is found at 481 to 618; sequence SVPYLASYVS…QLTLYGSVWS (138 aa). N-linked (GlcNAc...) asparagine glycosylation occurs at Asn-511. Residues 668–688 traverse the membrane as a helical segment; sequence LVLVGCFTVFWTVYYMLEVYL. The Cytoplasmic portion of the chain corresponds to 689–785; the sequence is SQRNVASNQV…VPHGKEEQIC (97 aa). Positions 700–751 are disordered; that stretch reads RSGPCHWPHRSRKAKEEGTELESVPLCSSKDPDEVETESRGPPTTSDLLAPD.

It belongs to the peptidase S8 family. Ca(2+) is required as a cofactor. Post-translationally, cysteine residues in the cytoplasmic tail are probably palmitoylated. In terms of processing, N-glycosylated. As to expression, expressed in spleen, thymus, prostate, testis, ovary, small intestine, colon and peripheral blood leukocyte.

The protein localises to the golgi apparatus. It localises to the trans-Golgi network membrane. Its activity is regulated as follows. Inhibited by zinc and copper. Functionally, serine endoprotease that processes various proproteins by cleavage at paired basic amino acids, recognizing the RXXX[KR]R consensus motif. Likely functions in the constitutive secretory pathway. The protein is Proprotein convertase subtilisin/kexin type 7 (PCSK7) of Homo sapiens (Human).